A 360-amino-acid chain; its full sequence is Photosystem II protein D1 2 (360 aa).

3 consecutive transmembrane segments (helical) span residues 29-46 (YIGW…AATI), 118-133 (HFLI…EWEL), and 142-156 (WIPV…AATA). Residue His-118 coordinates chlorophyll a. Tyr-126 contacts pheophytin a. Residues Asp-170 and Glu-189 each coordinate [CaMn4O5] cluster. Residues 197–218 (FHMLGVAGVFGGALFAAMHGSL) form a helical membrane-spanning segment. His-198 contributes to the chlorophyll a binding site. A quinone-binding positions include His-215 and 264 to 265 (SF). His-215 serves as a coordination point for Fe cation. Residue His-272 participates in Fe cation binding. A helical membrane pass occupies residues 274 to 288 (FLAAWPVVGIWFAAL). [CaMn4O5] cluster is bound by residues His-332, Glu-333, Asp-342, and Ala-344. Residues 345–360 (SGELAPVAMIAPSIEA) constitute a propeptide that is removed on maturation.

Belongs to the reaction center PufL/M/PsbA/D family. PSII is composed of 1 copy each of membrane proteins PsbA, PsbB, PsbC, PsbD, PsbE, PsbF, PsbH, PsbI, PsbJ, PsbK, PsbL, PsbM, PsbT, PsbX, PsbY, PsbZ, Psb30/Ycf12, peripheral proteins PsbO, CyanoQ (PsbQ), PsbU, PsbV and a large number of cofactors. It forms dimeric complexes. The D1/D2 heterodimer binds P680, chlorophylls that are the primary electron donor of PSII, and subsequent electron acceptors. It shares a non-heme iron and each subunit binds pheophytin, quinone, additional chlorophylls, carotenoids and lipids. D1 provides most of the ligands for the Mn4-Ca-O5 cluster of the oxygen-evolving complex (OEC). There is also a Cl(-1) ion associated with D1 and D2, which is required for oxygen evolution. The PSII complex binds additional chlorophylls, carotenoids and specific lipids. is required as a cofactor. In terms of processing, tyr-161 forms a radical intermediate that is referred to as redox-active TyrZ, YZ or Y-Z. C-terminally processed by CtpA; processing is essential to allow assembly of the oxygen-evolving complex and thus photosynthetic growth.

It localises to the cellular thylakoid membrane. The catalysed reaction is 2 a plastoquinone + 4 hnu + 2 H2O = 2 a plastoquinol + O2. In terms of biological role, photosystem II (PSII) is a light-driven water:plastoquinone oxidoreductase that uses light energy to abstract electrons from H(2)O, generating O(2) and a proton gradient subsequently used for ATP formation. It consists of a core antenna complex that captures photons, and an electron transfer chain that converts photonic excitation into a charge separation. The D1/D2 (PsbA/PsbD) reaction center heterodimer binds P680, the primary electron donor of PSII as well as several subsequent electron acceptors. This chain is Photosystem II protein D1 2, found in Synechococcus elongatus.